The following is a 301-amino-acid chain: tRNA (guanine-N(7)-)-methyltransferase (301 aa).

Residues 1 to 26 are disordered; the sequence is MSETPDSPRPVTPGSQASFGTYGGRP. Positions 85, 110, 137, and 160 each coordinate S-adenosyl-L-methionine. The active site involves D160. Substrate-binding residues include K164 and D196. The tract at residues 244–270 is disordered; it reads APVREGRAPVSTEHTGPNEGVDEEGGW. A substrate-binding site is contributed by 280–283; it reads TSFE.

Belongs to the class I-like SAM-binding methyltransferase superfamily. TrmB family.

The catalysed reaction is guanosine(46) in tRNA + S-adenosyl-L-methionine = N(7)-methylguanosine(46) in tRNA + S-adenosyl-L-homocysteine. It functions in the pathway tRNA modification; N(7)-methylguanine-tRNA biosynthesis. Catalyzes the formation of N(7)-methylguanine at position 46 (m7G46) in tRNA. The protein is tRNA (guanine-N(7)-)-methyltransferase of Paenarthrobacter aurescens (strain TC1).